The primary structure comprises 541 residues: Calcium-dependent protein kinase 9 (541 aa).

The interval 1–75 (MGNCFAKNHG…PGLSPKTTTK (75 aa)) is disordered. A lipid anchor (N-myristoyl glycine) is attached at G2. Positions 14 to 54 (PQQNGNTTRSVEVGVTNQDPPSYTPQARTTQQPEKPGSVNS) are enriched in polar residues. Position 69 is a phosphoserine (S69). The 259-residue stretch at 91–349 (YTLGKELGRG…AADVLQHPWL (259 aa)) folds into the Protein kinase domain. Residues 97 to 105 (LGRGQFGVT) and K120 contribute to the ATP site. The active-site Proton acceptor is D215. Position 255 is a phosphoserine (S255). The autoinhibitory domain stretch occupies residues 355–385 (ASDKPIDSAVLSRMKQFRAMNKLKKLALKVI). 4 consecutive EF-hand domains span residues 392–427 (EEIQ…LGSK), 428–463 (LTEA…RHRL), 464–499 (ESNE…YGMG), and 500–534 (DDAT…GNPQ). Positions 405, 407, 409, 411, 416, 441, 443, 445, 447, 452, 477, 479, 481, 483, 488, 512, 514, 516, 518, and 523 each coordinate Ca(2+).

The protein belongs to the protein kinase superfamily. Ser/Thr protein kinase family. CDPK subfamily.

Its subcellular location is the cell membrane. The catalysed reaction is L-seryl-[protein] + ATP = O-phospho-L-seryl-[protein] + ADP + H(+). It carries out the reaction L-threonyl-[protein] + ATP = O-phospho-L-threonyl-[protein] + ADP + H(+). Its activity is regulated as follows. Activated by calcium. Autophosphorylation may play an important role in the regulation of the kinase activity. In terms of biological role, may play a role in signal transduction pathways that involve calcium as a second messenger. The protein is Calcium-dependent protein kinase 9 (CPK9) of Arabidopsis thaliana (Mouse-ear cress).